The following is a 176-amino-acid chain: MRGFYIGRYQPFHNGHRHMVEEIAAEVDELVLGIGSAGDSHTTRNPFTAGERVMMVTKAVEKLDVTTYVVPIEDLDRNSVWVSHVQSMTPRFDIAYSNNPLVVRLFEEAGVEARGSPMFRRDVLEGAELRERMIHGRDWQALVPETVVDVIEEIDGVERIRRIAETDANGTAPSDA.

This sequence belongs to the archaeal NMN adenylyltransferase family.

It localises to the cytoplasm. It catalyses the reaction beta-nicotinamide D-ribonucleotide + ATP + H(+) = diphosphate + NAD(+). It functions in the pathway cofactor biosynthesis; NAD(+) biosynthesis; NAD(+) from nicotinamide D-ribonucleotide: step 1/1. This is Nicotinamide-nucleotide adenylyltransferase from Halorubrum lacusprofundi (strain ATCC 49239 / DSM 5036 / JCM 8891 / ACAM 34).